A 141-amino-acid polypeptide reads, in one-letter code: ATP synthase epsilon chain (141 aa).

The protein belongs to the ATPase epsilon chain family. As to quaternary structure, F-type ATPases have 2 components, CF(1) - the catalytic core - and CF(0) - the membrane proton channel. CF(1) has five subunits: alpha(3), beta(3), gamma(1), delta(1), epsilon(1). CF(0) has three main subunits: a, b and c.

Its subcellular location is the cell membrane. Functionally, produces ATP from ADP in the presence of a proton gradient across the membrane. In Lactococcus lactis subsp. cremoris (strain SK11), this protein is ATP synthase epsilon chain.